Consider the following 131-residue polypeptide: MAKTRSPSTPPAPERVAAFQTGISAETRAAAFLMAKGYRILARRFKTPYGEIDIVAQRRKLIAFVEVKARARLDDAAYALTPRQQQRIIAAAEAWLVANPDHATYELRFDAMLVAPKRLPQHLPAAFDASP.

Belongs to the UPF0102 family.

This Rhodopseudomonas palustris (strain BisB5) protein is UPF0102 protein RPD_0400.